The sequence spans 304 residues: Nod factor export ATP-binding protein I (304 aa).

The 231-residue stretch at 6-236 folds into the ABC transporter domain; it reads IDFRNVEKRY…EIGCDVIEIY (231 aa). 38–45 contributes to the ATP binding site; sequence GPNGAGKT.

It belongs to the ABC transporter superfamily. Lipooligosaccharide exporter (TC 3.A.1.102) family. In terms of assembly, the complex is composed of two ATP-binding proteins (NodI) and two transmembrane proteins (NodJ).

The protein localises to the cell inner membrane. Functionally, part of the ABC transporter complex NodIJ involved in the export of the nodulation factors (Nod factors), the bacterial signal molecules that induce symbiosis and subsequent nodulation induction. Nod factors are LCO (lipo-chitin oligosaccharide), a modified beta-1,4-linked N-acetylglucosamine oligosaccharide. This subunit is responsible for energy coupling to the transport system. The protein is Nod factor export ATP-binding protein I of Burkholderia orbicola (strain AU 1054).